The chain runs to 86 residues: Bacteriocin thailandicin (86 aa).

Residues 23–86 constitute a cross-link (cyclopeptide (Leu-Trp)); sequence LTANLGISSY…KYGAKYSAAW (64 aa).

The protein localises to the secreted. Functionally, cyclopeptide antibiotic with bacteriolytic activity against the Gram-positive bacteria S.aureus and S.thermophilus, and lower activity against the Gram-negative bacteria E.coli and P.aeruginosa. The sequence is that of Bacteriocin thailandicin from Enterococcus thailandicus.